Here is a 272-residue protein sequence, read N- to C-terminus: uncharacterized protein (272 aa).

This is an uncharacterized protein from Saccharomyces cerevisiae (strain ATCC 204508 / S288c) (Baker's yeast).